The following is a 346-amino-acid chain: Holliday junction branch migration complex subunit RuvB (346 aa).

The large ATPase domain (RuvB-L) stretch occupies residues 1 to 181 (MSDRNPLIDA…FGIPTRLNFY (181 aa)). Residues L20, R21, G62, K65, T66, T67, 128–130 (EDF), R171, Y181, and R218 each bind ATP. T66 lines the Mg(2+) pocket. Residues 182–252 (TVEELEYIVR…IADEALSRLE (71 aa)) are small ATPAse domain (RuvB-S). Residues 255–346 (NRGLDQLDRR…SQYGLFMEDE (92 aa)) form a head domain (RuvB-H) region. Residues R291, R310, and R315 each coordinate DNA.

Belongs to the RuvB family. Homohexamer. Forms an RuvA(8)-RuvB(12)-Holliday junction (HJ) complex. HJ DNA is sandwiched between 2 RuvA tetramers; dsDNA enters through RuvA and exits via RuvB. An RuvB hexamer assembles on each DNA strand where it exits the tetramer. Each RuvB hexamer is contacted by two RuvA subunits (via domain III) on 2 adjacent RuvB subunits; this complex drives branch migration. In the full resolvosome a probable DNA-RuvA(4)-RuvB(12)-RuvC(2) complex forms which resolves the HJ.

It localises to the cytoplasm. The catalysed reaction is ATP + H2O = ADP + phosphate + H(+). In terms of biological role, the RuvA-RuvB-RuvC complex processes Holliday junction (HJ) DNA during genetic recombination and DNA repair, while the RuvA-RuvB complex plays an important role in the rescue of blocked DNA replication forks via replication fork reversal (RFR). RuvA specifically binds to HJ cruciform DNA, conferring on it an open structure. The RuvB hexamer acts as an ATP-dependent pump, pulling dsDNA into and through the RuvAB complex. RuvB forms 2 homohexamers on either side of HJ DNA bound by 1 or 2 RuvA tetramers; 4 subunits per hexamer contact DNA at a time. Coordinated motions by a converter formed by DNA-disengaged RuvB subunits stimulates ATP hydrolysis and nucleotide exchange. Immobilization of the converter enables RuvB to convert the ATP-contained energy into a lever motion, pulling 2 nucleotides of DNA out of the RuvA tetramer per ATP hydrolyzed, thus driving DNA branch migration. The RuvB motors rotate together with the DNA substrate, which together with the progressing nucleotide cycle form the mechanistic basis for DNA recombination by continuous HJ branch migration. Branch migration allows RuvC to scan DNA until it finds its consensus sequence, where it cleaves and resolves cruciform DNA. The sequence is that of Holliday junction branch migration complex subunit RuvB from Brucella anthropi (strain ATCC 49188 / DSM 6882 / CCUG 24695 / JCM 21032 / LMG 3331 / NBRC 15819 / NCTC 12168 / Alc 37) (Ochrobactrum anthropi).